Consider the following 276-residue polypeptide: MRITLFDVQAMKPAGQRIAMLTAYDHPSAVLAERAGVPMLLVGDSLGMAVHGFDTTLPVTLDDMIRHARAVVRGTSRALVVADLPFLTYATEADAIASARRVMQEAGVQALKLEGGATIAPTVRRLTELGVPVMGHLGLTPQSQHTLGLRVQARQAAEARRLLDDALALQDAGAFAIVLELVPTELAQAVTRRLQIPVIGIGAGAGCDGQVQVWHDILGLFPGKSPRHAKRFAEIGTAIEDALRAYVSEVQSGTFPTEAQSSRMKPDELSRALNAE.

Residues Asp-44 and Asp-83 each coordinate Mg(2+). 3-methyl-2-oxobutanoate is bound by residues 44-45 (DS), Asp-83, and Lys-112. A Mg(2+)-binding site is contributed by Glu-114. Residue Glu-180 is the Proton acceptor of the active site. Residues 256–276 (PTEAQSSRMKPDELSRALNAE) form a disordered region.

The protein belongs to the PanB family. Homodecamer; pentamer of dimers. It depends on Mg(2+) as a cofactor.

The protein localises to the cytoplasm. It catalyses the reaction 3-methyl-2-oxobutanoate + (6R)-5,10-methylene-5,6,7,8-tetrahydrofolate + H2O = 2-dehydropantoate + (6S)-5,6,7,8-tetrahydrofolate. It functions in the pathway cofactor biosynthesis; (R)-pantothenate biosynthesis; (R)-pantoate from 3-methyl-2-oxobutanoate: step 1/2. Catalyzes the reversible reaction in which hydroxymethyl group from 5,10-methylenetetrahydrofolate is transferred onto alpha-ketoisovalerate to form ketopantoate. The protein is 3-methyl-2-oxobutanoate hydroxymethyltransferase of Gluconacetobacter diazotrophicus (strain ATCC 49037 / DSM 5601 / CCUG 37298 / CIP 103539 / LMG 7603 / PAl5).